A 122-amino-acid chain; its full sequence is Large ribosomal subunit protein bL19 (122 aa).

This sequence belongs to the bacterial ribosomal protein bL19 family.

In terms of biological role, this protein is located at the 30S-50S ribosomal subunit interface and may play a role in the structure and function of the aminoacyl-tRNA binding site. In Mycoplasmoides gallisepticum (strain R(low / passage 15 / clone 2)) (Mycoplasma gallisepticum), this protein is Large ribosomal subunit protein bL19.